The sequence spans 796 residues: Toll-like receptor 6 (796 aa).

Positions 1–31 (MTKDKEPIVKSFHFVCLMIIIVGTRIQFSDG) are cleaved as a signal peptide. At 32 to 586 (NEFAVDKSKR…MSELSCNITL (555 aa)) the chain is on the extracellular side. LRR repeat units lie at residues 54–77 (TKVLDMSQNYIAELQVSDMSFLSE), 78–101 (LTVLRLSHNRIQLLDLSVFKFNQD), 102–122 (LEYLDLSHNQLQKISCHPIVS), 123–147 (FRHLDLSFNDFKALPICKEFGNLSQ), 148–168 (LNFLGLSAMKLQKLDLLPIAH), 169–196 (LHLSYILLDLRNYYIKENETESLQILNA), 197–219 (KTLHLVFHPTSLFAIQVNISVNT), 220–250 (LGCLQLTNIKLNDDNCQVFIKFLSELTRGST), 251–277 (LLNFTLNHIETTWKCLVRVFQFLWPKP), 278–303 (VEYLNIYNLTIIESIREEDFTYSKTT), 304–330 (LKALTIEHITNQVFLFSQTALYTVFSE), 331–354 (MNIMMLTISDTPFIHMLCPHAPST), 355–378 (FKFLNFTQNVFTDSIFEKCSTLVK), 379–404 (LETLILQKNGLKDLFKVGLMTKDMPS), 405–429 (LEILDVSWNSLESGRHKENCTWVES), 430–450 (IVVLNLSSNMLTDSVFRCLPP), 451–474 (RIKVLDLHSNKIKSVPKQVVKLEA), 475–496 (LQELNVAFNSLTDLPGCGSFSS), and 497–520 (LSVLIIDHNSVSHPSADFFQSCQK). Cysteines 117 and 139 form a disulfide. An N-linked (GlcNAc...) asparagine glycan is attached at asparagine 144. 2 N-linked (GlcNAc...) asparagine glycosylation sites follow: asparagine 186 and asparagine 214. Cysteine 235 and cysteine 265 form a disulfide bridge. Asparagine 253 and asparagine 285 each carry an N-linked (GlcNAc...) asparagine glycan. Cysteine 348 and cysteine 373 are joined by a disulfide. The N-linked (GlcNAc...) asparagine glycan is linked to asparagine 359. Asparagine 423 and asparagine 434 each carry an N-linked (GlcNAc...) asparagine glycan. Cysteine 424 and cysteine 447 are joined by a disulfide. Residues 521 to 575 (MRSIKAGDNPFQCTCELREFVKNIDQVSSEVLEGWPDSYKCDYPESYRGSPLKDF) enclose the LRRCT domain. N-linked (GlcNAc...) asparagine glycosylation is present at asparagine 583. A helical transmembrane segment spans residues 587–607 (LIVTIGATMLVLAVTVTSLCI). Topologically, residues 608-796 (YLDLPWYLRM…LVTENNDVKS (189 aa)) are cytoplasmic. In terms of domain architecture, TIR spans 640-781 (LQFHAFISYS…LFWANIRAAF (142 aa)).

The protein belongs to the Toll-like receptor family. As to quaternary structure, homodimer (via cytoplasmic TIR domain). Heterodimer with TLR2 via their respective extracellular domains. Binds MYD88 via their respective TIR domains. Interacts with CD36, following CD36 stimulation by oxLDL or amyloid-beta 42, and forms a heterodimer with TLR4. The trimeric complex is internalized and triggers inflammatory response. LYN kinase activity facilitates TLR4:TLR6 heterodimerization and signal initiation. The heterodimer TLR2:TLR6 interacts with CD14 and CD36 in response to triacylated lipopeptides. As to expression, detected in monocytes, CD11c+ immature dendritic cells, plasmacytoid pre-dendritic cells and dermal microvessel endothelial cells.

The protein resides in the cell membrane. Its subcellular location is the cytoplasmic vesicle. It localises to the phagosome membrane. It is found in the membrane raft. The protein localises to the golgi apparatus. Participates in the innate immune response to Gram-positive bacteria and fungi. Specifically recognizes diacylated and, to a lesser extent, triacylated lipopeptides. In response to diacylated lipopeptides, forms the activation cluster TLR2:TLR6:CD14:CD36, this cluster triggers signaling from the cell surface and subsequently is targeted to the Golgi in a lipid-raft dependent pathway. Acts via MYD88 and TRAF6, leading to NF-kappa-B activation, cytokine secretion and the inflammatory response. Recognizes mycoplasmal macrophage-activating lipopeptide-2kD (MALP-2), soluble tuberculosis factor (STF), phenol-soluble modulin (PSM) and B.burgdorferi outer surface protein A lipoprotein (OspA-L) cooperatively with TLR2. In complex with TLR4, promotes sterile inflammation in monocytes/macrophages in response to oxidized low-density lipoprotein (oxLDL) or amyloid-beta 42. In this context, the initial signal is provided by oxLDL- or amyloid-beta 42-binding to CD36. This event induces the formation of a heterodimer of TLR4 and TLR6, which is rapidly internalized and triggers inflammatory response, leading to the NF-kappa-B-dependent production of CXCL1, CXCL2 and CCL9 cytokines, via MYD88 signaling pathway, and CCL5 cytokine, via TICAM1 signaling pathway, as well as IL1B secretion. In Homo sapiens (Human), this protein is Toll-like receptor 6 (TLR6).